The chain runs to 344 residues: Anthranilate phosphoribosyltransferase (344 aa).

Residues Gly84, 87 to 88 (GD), Thr92, 94 to 97 (NIST), 112 to 120 (KHGNRSVSS), and Ser124 each bind 5-phospho-alpha-D-ribose 1-diphosphate. Position 84 (Gly84) interacts with anthranilate. Mg(2+) is bound at residue Ser96. Asn115 provides a ligand contact to anthranilate. Residue Arg170 participates in anthranilate binding. Mg(2+) is bound by residues Asp229 and Glu230.

This sequence belongs to the anthranilate phosphoribosyltransferase family. Homodimer. It depends on Mg(2+) as a cofactor.

The catalysed reaction is N-(5-phospho-beta-D-ribosyl)anthranilate + diphosphate = 5-phospho-alpha-D-ribose 1-diphosphate + anthranilate. It functions in the pathway amino-acid biosynthesis; L-tryptophan biosynthesis; L-tryptophan from chorismate: step 2/5. In terms of biological role, catalyzes the transfer of the phosphoribosyl group of 5-phosphorylribose-1-pyrophosphate (PRPP) to anthranilate to yield N-(5'-phosphoribosyl)-anthranilate (PRA). The polypeptide is Anthranilate phosphoribosyltransferase (Xylella fastidiosa (strain M23)).